Reading from the N-terminus, the 269-residue chain is Hdr-like menaquinol oxidoreductase iron-sulfur subunit 1 (269 aa).

A signal peptide (tat-type signal) is located at residues 1–26; the sequence is MMSRRKFLLLTGAAAAGAILTPQISA. Positions 52, 55, 72, 76, 118, 121, 126, 130, 150, 153, 156, 160, 194, 197, 215, and 219 each coordinate [4Fe-4S] cluster. Residues 141 to 170 enclose the 4Fe-4S ferredoxin-type domain; it reads GIVEIDMHRCIGCRYCMIACPYGARCFNFI.

Consists of five subunits: an integral membrane subunit, a cytochrome b-like subunit, a cytochrome c subunit and two iron-sulfur subunits. It depends on [4Fe-4S] cluster as a cofactor. In terms of processing, predicted to be exported by the Tat system. The position of the signal peptide cleavage has been experimentally proven.

The protein resides in the cell membrane. Its function is as follows. Has menaquinol-oxidizing activity. HmeA, HmeB and HmeE subunits may together catalyze electron transfer from menaquinol to cytochrome c. The chain is Hdr-like menaquinol oxidoreductase iron-sulfur subunit 1 (hmeA) from Archaeoglobus fulgidus (strain ATCC 49558 / DSM 4304 / JCM 9628 / NBRC 100126 / VC-16).